The following is a 415-amino-acid chain: Gamma-glutamyl phosphate reductase (415 aa).

Belongs to the gamma-glutamyl phosphate reductase family.

Its subcellular location is the cytoplasm. The catalysed reaction is L-glutamate 5-semialdehyde + phosphate + NADP(+) = L-glutamyl 5-phosphate + NADPH + H(+). Its pathway is amino-acid biosynthesis; L-proline biosynthesis; L-glutamate 5-semialdehyde from L-glutamate: step 2/2. Catalyzes the NADPH-dependent reduction of L-glutamate 5-phosphate into L-glutamate 5-semialdehyde and phosphate. The product spontaneously undergoes cyclization to form 1-pyrroline-5-carboxylate. This is Gamma-glutamyl phosphate reductase from Clostridium perfringens (strain 13 / Type A).